Here is a 286-residue protein sequence, read N- to C-terminus: MHVDIVSIFPEYFRPLELSLIGKARARGVLDVHLWDLRDFTHDPHRTVDDTPYGGGPGMVMRPEPWGETLDAVRAEAARLGVDAPLLIVPTPAGELLTQRAAERYAAEPWLAFACGRYEGIDERVLLDARRHMRVEEVSIGDYVLAGGEAATLVIVEAVARLLPGVVGNQASVLDDSHAQGLLEGPAYTKPAVWRGLEVPEVLLSGNHAAIARWRREQAIRRTAVRRPELLDALPPGSLTPHEEALAAEARLHAGRSAETPPPAGAAGSQAEGPPGTSPSDAAVAH.

Residues glycine 116 and 140–145 (IGDYVL) contribute to the S-adenosyl-L-methionine site. Positions 232–286 (DALPPGSLTPHEEALAAEARLHAGRSAETPPPAGAAGSQAEGPPGTSPSDAAVAH) are disordered.

This sequence belongs to the RNA methyltransferase TrmD family. Homodimer.

It is found in the cytoplasm. It catalyses the reaction guanosine(37) in tRNA + S-adenosyl-L-methionine = N(1)-methylguanosine(37) in tRNA + S-adenosyl-L-homocysteine + H(+). Functionally, specifically methylates guanosine-37 in various tRNAs. The sequence is that of tRNA (guanine-N(1)-)-methyltransferase from Acidothermus cellulolyticus (strain ATCC 43068 / DSM 8971 / 11B).